Reading from the N-terminus, the 728-residue chain is Polyribonucleotide nucleotidyltransferase (728 aa).

Mg(2+) contacts are provided by D487 and D493. Positions P554–I613 constitute a KH domain. Residues G623–K691 enclose the S1 motif domain. The segment covering T697 to P707 has biased composition (acidic residues). A disordered region spans residues T697 to D728. Residues E709–G718 are compositionally biased toward basic and acidic residues.

It belongs to the polyribonucleotide nucleotidyltransferase family. Requires Mg(2+) as cofactor.

It is found in the cytoplasm. The catalysed reaction is RNA(n+1) + phosphate = RNA(n) + a ribonucleoside 5'-diphosphate. In terms of biological role, involved in mRNA degradation. Catalyzes the phosphorolysis of single-stranded polyribonucleotides processively in the 3'- to 5'-direction. The chain is Polyribonucleotide nucleotidyltransferase from Parvibaculum lavamentivorans (strain DS-1 / DSM 13023 / NCIMB 13966).